The following is a 201-amino-acid chain: Pyridoxine/pyridoxamine 5'-phosphate oxidase (201 aa).

Residues 45 to 50 (RMVLLK), 65 to 66 (YT), R71, K72, and Q94 each bind FMN. K50 provides a ligand contact to substrate. The substrate site is built by Y112, R116, and S120. Residues 129 to 130 (QS) and W174 each bind FMN. 180–182 (RLH) is a substrate binding site. R184 is a binding site for FMN.

It belongs to the pyridoxamine 5'-phosphate oxidase family. In terms of assembly, homodimer. It depends on FMN as a cofactor.

It catalyses the reaction pyridoxamine 5'-phosphate + O2 + H2O = pyridoxal 5'-phosphate + H2O2 + NH4(+). The enzyme catalyses pyridoxine 5'-phosphate + O2 = pyridoxal 5'-phosphate + H2O2. The protein operates within cofactor metabolism; pyridoxal 5'-phosphate salvage; pyridoxal 5'-phosphate from pyridoxamine 5'-phosphate: step 1/1. It participates in cofactor metabolism; pyridoxal 5'-phosphate salvage; pyridoxal 5'-phosphate from pyridoxine 5'-phosphate: step 1/1. In terms of biological role, catalyzes the oxidation of either pyridoxine 5'-phosphate (PNP) or pyridoxamine 5'-phosphate (PMP) into pyridoxal 5'-phosphate (PLP). This is Pyridoxine/pyridoxamine 5'-phosphate oxidase from Rhodospirillum rubrum (strain ATCC 11170 / ATH 1.1.1 / DSM 467 / LMG 4362 / NCIMB 8255 / S1).